Here is a 409-residue protein sequence, read N- to C-terminus: Tryptophan synthase beta chain (409 aa).

Lysine 86 is modified (N6-(pyridoxal phosphate)lysine).

Belongs to the TrpB family. In terms of assembly, tetramer of two alpha and two beta chains. It depends on pyridoxal 5'-phosphate as a cofactor.

The enzyme catalyses (1S,2R)-1-C-(indol-3-yl)glycerol 3-phosphate + L-serine = D-glyceraldehyde 3-phosphate + L-tryptophan + H2O. It participates in amino-acid biosynthesis; L-tryptophan biosynthesis; L-tryptophan from chorismate: step 5/5. In terms of biological role, the beta subunit is responsible for the synthesis of L-tryptophan from indole and L-serine. This is Tryptophan synthase beta chain from Shewanella pealeana (strain ATCC 700345 / ANG-SQ1).